The chain runs to 211 residues: Riboflavin kinase (211 aa).

An H-T-H motif-like region spans residues 1 to 81; that stretch reads MKCIDRRLIG…DLLRYFNILS (81 aa). Residues 82-211 are riboflavin kinase; sequence IRLSGRVVSG…DRVEIEIYLE (130 aa). 91 to 96 contributes to the CDP binding site; that stretch reads GLGEGA. The Mg(2+) site is built by threonine 120 and asparagine 122. Residues threonine 177 and glutamate 185 each coordinate FMN. A CDP-binding site is contributed by 190 to 193; it reads FKLR.

It belongs to the archaeal riboflavin kinase family. Mg(2+) serves as cofactor.

It carries out the reaction riboflavin + CTP = CDP + FMN + H(+). Its pathway is cofactor biosynthesis; FMN biosynthesis; FMN from riboflavin (CTP route): step 1/1. Functionally, catalyzes the CTP-dependent phosphorylation of riboflavin (vitamin B2) to form flavin mononucleotide (FMN). This is Riboflavin kinase (ribK) from Pyrobaculum islandicum (strain DSM 4184 / JCM 9189 / GEO3).